We begin with the raw amino-acid sequence, 67 residues long: Beta-defensin 1 (67 aa).

The signal sequence occupies residues 1 to 22; sequence MRIHYLLFAVLFLFLMPVPGEG. 3 cysteine pairs are disulfide-bonded: Cys-33/Cys-62, Cys-40/Cys-55, and Cys-45/Cys-63.

In terms of assembly, monomer. Homodimer. Highly expressed in tongue, nasopharyngeal mucosa and skin, and to a lower extent in the Eustachian tube, lung and trachea.

It is found in the secreted. It localises to the membrane. Its function is as follows. Has antibacterial activity against Gram-positive bacterium S.pneumoniae Serotype 14. Is also active against Gram-negative bacteria M.catarrhalis 1857, and non-typeable H.influenzae strains 86-028NP and 1128. Has antifungal activity against C.albicans. May have a role in maintaining sterility in the middle ear. May act as a ligand for C-C chemokine receptor CCR6. Positively regulates the sperm motility and bactericidal activity in a CCR6-dependent manner. Binds to CCR6 and triggers Ca2+ mobilization in the sperm which is important for its motility. The sequence is that of Beta-defensin 1 (DEFB1) from Chinchilla lanigera (Long-tailed chinchilla).